Consider the following 205-residue polypeptide: Large ribosomal subunit protein uL4 (205 aa).

Positions 56–78 (VSGTTAKPYRQKHTGRARQGSLR) are disordered.

It belongs to the universal ribosomal protein uL4 family. In terms of assembly, part of the 50S ribosomal subunit.

Functionally, one of the primary rRNA binding proteins, this protein initially binds near the 5'-end of the 23S rRNA. It is important during the early stages of 50S assembly. It makes multiple contacts with different domains of the 23S rRNA in the assembled 50S subunit and ribosome. Forms part of the polypeptide exit tunnel. This Ehrlichia ruminantium (strain Gardel) protein is Large ribosomal subunit protein uL4.